The primary structure comprises 416 residues: Glutamyl-tRNA reductase (416 aa).

Residues 49-52, S105, 110-112, and Q116 each bind substrate; these read TCNR and EPQ. The Nucleophile role is filled by C50. Position 185–190 (185–190) interacts with NADP(+); it reads GAGETI.

It belongs to the glutamyl-tRNA reductase family. In terms of assembly, homodimer.

It catalyses the reaction (S)-4-amino-5-oxopentanoate + tRNA(Glu) + NADP(+) = L-glutamyl-tRNA(Glu) + NADPH + H(+). It functions in the pathway porphyrin-containing compound metabolism; protoporphyrin-IX biosynthesis; 5-aminolevulinate from L-glutamyl-tRNA(Glu): step 1/2. Functionally, catalyzes the NADPH-dependent reduction of glutamyl-tRNA(Glu) to glutamate 1-semialdehyde (GSA). The protein is Glutamyl-tRNA reductase of Shewanella oneidensis (strain ATCC 700550 / JCM 31522 / CIP 106686 / LMG 19005 / NCIMB 14063 / MR-1).